The following is a 351-amino-acid chain: Maleylacetate reductase (351 aa).

It belongs to the iron-containing alcohol dehydrogenase family. Homodimer.

The catalysed reaction is 3-oxoadipate + NAD(+) = maleylacetate + NADH + H(+). It participates in aromatic compound metabolism. In terms of biological role, involved in the gamma-resorcylate (2,6-dihydroxybenzoate) catabolism. Catalyzes the reduction of maleylacetate to 3-oxoadipate. In Rhizobium sp. (strain MTP-10005), this protein is Maleylacetate reductase.